Reading from the N-terminus, the 589-residue chain is Pentalenolactone D synthase (589 aa).

FAD-binding positions include 60–61 (IG), 82–83 (DE), 90–91 (TW), 102–103 (DV), Tyr-108, Val-152, and Met-491.

It belongs to the FAD-binding monooxygenase family. Requires FAD as cofactor.

The catalysed reaction is 1-deoxy-11-oxopentalenate + NADPH + O2 + H(+) = pentalenolactone D + NADP(+) + H2O. It functions in the pathway antibiotic biosynthesis; pentalenolactone biosynthesis. Functionally, catalyzes the flavin-dependent Baeyer-Villiger oxidation of 1-deoxy-11-oxopentalenic acid to pentalenolactone D in the biosynthesis of pentalenolactone antibiotic. This chain is Pentalenolactone D synthase (pntE), found in Streptomyces arenae.